A 358-amino-acid polypeptide reads, in one-letter code: tRNA-specific 2-thiouridylase MnmA (358 aa).

ATP contacts are provided by residues 22 to 29 (LVSGGIDS) and phenylalanine 48. Cysteine 105 acts as the Nucleophile in catalysis. Residues cysteine 105 and cysteine 201 are joined by a disulfide bond. Residue glycine 129 participates in ATP binding. Positions 151–153 (KEQ) are interaction with tRNA. Cysteine 201 serves as the catalytic Cysteine persulfide intermediate. The segment at 306 to 307 (RY) is interaction with tRNA.

Belongs to the MnmA/TRMU family.

It is found in the cytoplasm. The enzyme catalyses S-sulfanyl-L-cysteinyl-[protein] + uridine(34) in tRNA + AH2 + ATP = 2-thiouridine(34) in tRNA + L-cysteinyl-[protein] + A + AMP + diphosphate + H(+). Functionally, catalyzes the 2-thiolation of uridine at the wobble position (U34) of tRNA, leading to the formation of s(2)U34. In Desulfosudis oleivorans (strain DSM 6200 / JCM 39069 / Hxd3) (Desulfococcus oleovorans), this protein is tRNA-specific 2-thiouridylase MnmA.